A 144-amino-acid polypeptide reads, in one-letter code: Large ribosomal subunit protein uL11 (144 aa).

This sequence belongs to the universal ribosomal protein uL11 family. Part of the ribosomal stalk of the 50S ribosomal subunit. Interacts with L10 and the large rRNA to form the base of the stalk. L10 forms an elongated spine to which L12 dimers bind in a sequential fashion forming a multimeric L10(L12)X complex. Post-translationally, one or more lysine residues are methylated.

Its function is as follows. Forms part of the ribosomal stalk which helps the ribosome interact with GTP-bound translation factors. The protein is Large ribosomal subunit protein uL11 of Streptomyces coelicolor (strain ATCC BAA-471 / A3(2) / M145).